Consider the following 212-residue polypeptide: Peptide methionine sulfoxide reductase MsrA (212 aa).

Cys-52 is an active-site residue.

This sequence belongs to the MsrA Met sulfoxide reductase family.

It catalyses the reaction L-methionyl-[protein] + [thioredoxin]-disulfide + H2O = L-methionyl-(S)-S-oxide-[protein] + [thioredoxin]-dithiol. It carries out the reaction [thioredoxin]-disulfide + L-methionine + H2O = L-methionine (S)-S-oxide + [thioredoxin]-dithiol. Functionally, has an important function as a repair enzyme for proteins that have been inactivated by oxidation. Catalyzes the reversible oxidation-reduction of methionine sulfoxide in proteins to methionine. The chain is Peptide methionine sulfoxide reductase MsrA from Escherichia coli O6:K15:H31 (strain 536 / UPEC).